The chain runs to 249 residues: Putative TrmH family tRNA/rRNA methyltransferase (249 aa).

S-adenosyl-L-methionine contacts are provided by Gly196, Ile216, and Leu225.

The protein belongs to the class IV-like SAM-binding methyltransferase superfamily. RNA methyltransferase TrmH family.

The protein is Putative TrmH family tRNA/rRNA methyltransferase of Staphylococcus haemolyticus (strain JCSC1435).